Here is a 517-residue protein sequence, read N- to C-terminus: Mucin-like protein 3 (517 aa).

The first 29 residues, 1 to 29 (MAQPVHSLCSAFGLQCCLLFLLASWGAGA), serve as a signal peptide directing secretion. Over 30 to 448 (TTFQEYQKTG…GENDSFPAWA (419 aa)) the chain is Extracellular. The disordered stretch occupies residues 67-341 (SGQRPPELPK…PTENLGNTTL (275 aa)). Residues 83–93 (QKRHCNTTRHS) are compositionally biased toward basic residues. Asn88 is a glycosylation site (N-linked (GlcNAc...) asparagine). Basic and acidic residues predominate over residues 105-116 (TIDHKSSTDNHE). Asn124 carries an N-linked (GlcNAc...) asparagine glycan. Over residues 169-179 (RKSTTGKSTVT) the composition is skewed to polar residues. Residues 180–190 (RKSDKTGRPLE) are compositionally biased toward basic and acidic residues. Residues 194–213 (STLDKTSTSSHKTTTSFHNS) show a composition bias toward low complexity. 3 stretches are compositionally biased toward polar residues: residues 214–225 (GNSQTKQKSTSF), 232–243 (ASKTTYKTTGTP), and 263–283 (TKTT…QSLA). The span at 305–317 (TENRERTANENKK) shows a compositional bias: basic and acidic residues. Asn338 carries an N-linked (GlcNAc...) asparagine glycan. Residues 449 to 469 (IVIVVLVAVILLLVFLGLIFL) traverse the membrane as a helical segment. The Cytoplasmic portion of the chain corresponds to 470–517 (VSYMMRTRRTLTQNTQYNDAEDEGGPNSYPVYLMEQQNLGMGQIPSPR).

As to expression, detected in lung, esophagus, stomach, rectum, skin, cervix, testis, kidney, uterus and small intestine. Expressed in pancreas (at protein level).

The protein resides in the cell membrane. The protein localises to the cytoplasm. Its function is as follows. May modulate NF-kappaB signaling and play a role in cell growth. In Homo sapiens (Human), this protein is Mucin-like protein 3.